Here is a 97-residue protein sequence, read N- to C-terminus: Co-chaperonin GroES (97 aa).

This sequence belongs to the GroES chaperonin family. In terms of assembly, heptamer of 7 subunits arranged in a ring. Interacts with the chaperonin GroEL.

The protein localises to the cytoplasm. Functionally, together with the chaperonin GroEL, plays an essential role in assisting protein folding. The GroEL-GroES system forms a nano-cage that allows encapsulation of the non-native substrate proteins and provides a physical environment optimized to promote and accelerate protein folding. GroES binds to the apical surface of the GroEL ring, thereby capping the opening of the GroEL channel. The chain is Co-chaperonin GroES from Klebsiella pneumoniae subsp. pneumoniae (strain ATCC 700721 / MGH 78578).